Consider the following 586-residue polypeptide: Kelch-like protein 7 (586 aa).

Residues 44–111 enclose the BTB domain; sequence CDVILMVQER…AYTARISVNS (68 aa). A BACK domain is found at 146-248; that stretch reads CLGISVLAEC…SKNFLSKTVQ (103 aa). Kelch repeat units follow at residues 294–336, 337–382, 383–430, 431–481, 483–528, and 530–575; these read RIAL…FWDN, VVYI…AAEG, KIYT…EANG, LIYV…FVKD, IFAV…AVGS, and VYVL…CVVD.

Homodimer. Component of the BCR(KLHL7) E3 ubiquitin ligase complex.

The protein localises to the nucleus. The protein resides in the cytoplasm. It functions in the pathway protein modification; protein ubiquitination. Its function is as follows. Substrate-specific adapter of a BCR (BTB-CUL3-RBX1) E3 ubiquitin ligase complex. The BCR(KLHL7) complex acts by mediating ubiquitination and subsequent degradation of substrate proteins. Probably mediates 'Lys-48'-linked ubiquitination. The polypeptide is Kelch-like protein 7 (KLHL7) (Gallus gallus (Chicken)).